Reading from the N-terminus, the 365-residue chain is Patr class I histocompatibility antigen, A-126 alpha chain (365 aa).

An N-terminal signal peptide occupies residues 1–24 (MAVMAPRTLVLLLSGALALTQTWA). Residues 25 to 114 (GSHSMRYFST…LRGYYNQSED (90 aa)) are alpha-1. Over 25 to 308 (GSHSMRYFST…EPSSQPTIPI (284 aa)) the chain is Extracellular. N110 carries an N-linked (GlcNAc...) asparagine glycan. Residues 115–206 (GSHTIQLMFG…ENGKETLQRT (92 aa)) form an alpha-2 region. Intrachain disulfides connect C125–C188 and C227–C283. Residues 207 to 298 (DPPKTHMTHH…GLPKPLTLRW (92 aa)) form an alpha-3 region. An Ig-like C1-type domain is found at 209-295 (PKTHMTHHPI…QHEGLPKPLT (87 aa)). Residues 299–308 (EPSSQPTIPI) are connecting peptide. The helical transmembrane segment at 309-332 (VGIIAGLVLLGAVITGAVVAAVMW) threads the bilayer. The Cytoplasmic portion of the chain corresponds to 333–365 (RRKSSDRKGGSYSQAASSDSAQGSDVSLTACKV). The tract at residues 338 to 365 (DRKGGSYSQAASSDSAQGSDVSLTACKV) is disordered. Residues 342–359 (GSYSQAASSDSAQGSDVS) are compositionally biased toward low complexity. S343 carries the phosphoserine modification. Y344 carries the post-translational modification Phosphotyrosine. S345, S349, S352, S356, and S359 each carry phosphoserine.

The protein belongs to the MHC class I family. As to quaternary structure, heterodimer of an alpha chain and a beta chain (beta-2-microglobulin).

It localises to the membrane. Involved in the presentation of foreign antigens to the immune system. This chain is Patr class I histocompatibility antigen, A-126 alpha chain (Patr-A), found in Pan troglodytes (Chimpanzee).